A 164-amino-acid chain; its full sequence is ATP synthase subunit b 1 (164 aa).

The helical transmembrane segment at 8–28 (PETWVAIAFVILMGLFAYLGV) threads the bilayer.

It belongs to the ATPase B chain family. As to quaternary structure, F-type ATPases have 2 components, F(1) - the catalytic core - and F(0) - the membrane proton channel. F(1) has five subunits: alpha(3), beta(3), gamma(1), delta(1), epsilon(1). F(0) has three main subunits: a(1), b(2) and c(10-14). The alpha and beta chains form an alternating ring which encloses part of the gamma chain. F(1) is attached to F(0) by a central stalk formed by the gamma and epsilon chains, while a peripheral stalk is formed by the delta and b chains.

It localises to the cell inner membrane. Its function is as follows. F(1)F(0) ATP synthase produces ATP from ADP in the presence of a proton or sodium gradient. F-type ATPases consist of two structural domains, F(1) containing the extramembraneous catalytic core and F(0) containing the membrane proton channel, linked together by a central stalk and a peripheral stalk. During catalysis, ATP synthesis in the catalytic domain of F(1) is coupled via a rotary mechanism of the central stalk subunits to proton translocation. Functionally, component of the F(0) channel, it forms part of the peripheral stalk, linking F(1) to F(0). This Bradyrhizobium sp. (strain ORS 278) protein is ATP synthase subunit b 1.